Reading from the N-terminus, the 261-residue chain is Cytochrome c oxidase subunit 3 (261 aa).

At 1-15 the chain is on the mitochondrial matrix side; sequence MSHQAHAYHMVDPSP. The helical transmembrane segment at 16–34 threads the bilayer; the sequence is WPLTGAGAALLMTSGLAMW. Topologically, residues 35–40 are mitochondrial intermembrane; the sequence is FHKNSC. Residues 41–66 form a helical membrane-spanning segment; that stretch reads ILMTLGLILMLLTMYQWWRDIVREGT. Topologically, residues 67–72 are mitochondrial matrix; sequence FLGHHT. Residues 73-105 traverse the membrane as a helical segment; the sequence is SPVQQGLRYGMILFIISEVCFFAGFFWAFYHAS. Over 106–128 the chain is Mitochondrial intermembrane; sequence LAPTPELGLTWPPTGINPLNPFE. Residues 129 to 152 traverse the membrane as a helical segment; the sequence is VPLLNTAVLLASGVSVTWAHHSIT. The Mitochondrial matrix segment spans residues 153–155; that stretch reads EKN. A helical transmembrane segment spans residues 156–183; it reads RTETTQALTLTVLLGLYFTALQIMEYYE. Topologically, residues 184-190 are mitochondrial intermembrane; the sequence is TPFTMAD. A helical membrane pass occupies residues 191-223; the sequence is GVYGSTFFVATGFHGLHVIIGSLFLLTCLLRHL. Over 224–232 the chain is Mitochondrial matrix; the sequence is QYHFTSKHH. Residues 233 to 256 traverse the membrane as a helical segment; that stretch reads FGFEAAAWYWHFVDVVWLFLYISI. Over 257–261 the chain is Mitochondrial intermembrane; it reads YWWGS.

This sequence belongs to the cytochrome c oxidase subunit 3 family. In terms of assembly, component of the cytochrome c oxidase (complex IV, CIV), a multisubunit enzyme composed of 14 subunits. The complex is composed of a catalytic core of 3 subunits MT-CO1, MT-CO2 and MT-CO3, encoded in the mitochondrial DNA, and 11 supernumerary subunits COX4I, COX5A, COX5B, COX6A, COX6B, COX6C, COX7A, COX7B, COX7C, COX8 and NDUFA4, which are encoded in the nuclear genome. The complex exists as a monomer or a dimer and forms supercomplexes (SCs) in the inner mitochondrial membrane with NADH-ubiquinone oxidoreductase (complex I, CI) and ubiquinol-cytochrome c oxidoreductase (cytochrome b-c1 complex, complex III, CIII), resulting in different assemblies (supercomplex SCI(1)III(2)IV(1) and megacomplex MCI(2)III(2)IV(2)).

The protein localises to the mitochondrion inner membrane. It carries out the reaction 4 Fe(II)-[cytochrome c] + O2 + 8 H(+)(in) = 4 Fe(III)-[cytochrome c] + 2 H2O + 4 H(+)(out). Functionally, component of the cytochrome c oxidase, the last enzyme in the mitochondrial electron transport chain which drives oxidative phosphorylation. The respiratory chain contains 3 multisubunit complexes succinate dehydrogenase (complex II, CII), ubiquinol-cytochrome c oxidoreductase (cytochrome b-c1 complex, complex III, CIII) and cytochrome c oxidase (complex IV, CIV), that cooperate to transfer electrons derived from NADH and succinate to molecular oxygen, creating an electrochemical gradient over the inner membrane that drives transmembrane transport and the ATP synthase. Cytochrome c oxidase is the component of the respiratory chain that catalyzes the reduction of oxygen to water. Electrons originating from reduced cytochrome c in the intermembrane space (IMS) are transferred via the dinuclear copper A center (CU(A)) of subunit 2 and heme A of subunit 1 to the active site in subunit 1, a binuclear center (BNC) formed by heme A3 and copper B (CU(B)). The BNC reduces molecular oxygen to 2 water molecules using 4 electrons from cytochrome c in the IMS and 4 protons from the mitochondrial matrix. The protein is Cytochrome c oxidase subunit 3 (MT-CO3) of Petromyzon marinus (Sea lamprey).